Reading from the N-terminus, the 247-residue chain is Disease resistance protein BAK6 (247 aa).

A signal peptide spans 1–24 (MAAVQFAAAGVLTGLLALATLASC). Asn-66, Asn-104, and Asn-113 each carry an N-linked (GlcNAc...) asparagine glycan. 6 LRR repeats span residues 90–114 (LESL…LGNL), 116–138 (DLIS…LGSI), 139–161 (STLR…SFGN), 162–186 (LTSL…LGNI), 188–210 (SLQF…VLSL), and 213–237 (VGNL…GLRV). Residues Asn-150 and Asn-161 are each glycosylated (N-linked (GlcNAc...) asparagine). The N-linked (GlcNAc...) asparagine glycan is linked to Asn-215.

As to quaternary structure, interacts with WAK17 isoform 1; the interaction is direct. In terms of assembly, (Microbial infection) Interacts with G.zeae CFEM1; the interaction is direct. Interacts with G.zeae CFEMN1; the interaction is direct. Interacts with G.zeae CFEM5; the interaction is direct.

In terms of biological role, contributes to activation of the hypersensitive response, a form of programmed cell death, upon fungal infection. May sense the presence of fungal material and relay the signal to WAK17 isoform 1. This chain is Disease resistance protein BAK6, found in Zea mays (Maize).